The chain runs to 346 residues: Lipooligosaccharide heptosyltransferase 2 (346 aa).

Belongs to the glycosyltransferase 9 family.

It catalyses the reaction an L-alpha-D-Hep-(1-&gt;5)-[alpha-Kdo-(2-&gt;4)]-alpha-Kdo-(2-&gt;6)-lipid A + ADP-L-glycero-beta-D-manno-heptose = an L-alpha-D-Hep-(1-&gt;3)-L-alpha-D-Hep-(1-&gt;5)-[alpha-Kdo-(2-&gt;4)]-alpha-Kdo-(2-&gt;6)-lipid A + ADP + H(+). It functions in the pathway bacterial outer membrane biogenesis; LOS core biosynthesis. Its function is as follows. Glycosyltransferase involved in the biosynthesis of the core oligosaccharide region of lipooligosaccharide (LOS). Catalyzes the addition of a heptose unit to the heptosyl-Kdo2-lipid A module. This Haemophilus influenzae (strain ATCC 51907 / DSM 11121 / KW20 / Rd) protein is Lipooligosaccharide heptosyltransferase 2 (waaF).